A 208-amino-acid polypeptide reads, in one-letter code: Holliday junction branch migration complex subunit RuvA (208 aa).

The segment at 1–64 is domain I; the sequence is MIGKLKGIVD…EDMIRLYGFR (64 aa). The tract at residues 65–143 is domain II; it reads SDAEREWFRL…AFAPVDPALV (79 aa). A flexible linker region spans residues 144 to 152; that stretch reads ALTGAVEDR. The domain III stretch occupies residues 153–208; the sequence is TAPQPVADAISALVNLGYPQVQASAAIAAALKGLGDGAETVEAKTLIRLGLRELAR.

The protein belongs to the RuvA family. As to quaternary structure, homotetramer. Forms an RuvA(8)-RuvB(12)-Holliday junction (HJ) complex. HJ DNA is sandwiched between 2 RuvA tetramers; dsDNA enters through RuvA and exits via RuvB. An RuvB hexamer assembles on each DNA strand where it exits the tetramer. Each RuvB hexamer is contacted by two RuvA subunits (via domain III) on 2 adjacent RuvB subunits; this complex drives branch migration. In the full resolvosome a probable DNA-RuvA(4)-RuvB(12)-RuvC(2) complex forms which resolves the HJ.

It localises to the cytoplasm. In terms of biological role, the RuvA-RuvB-RuvC complex processes Holliday junction (HJ) DNA during genetic recombination and DNA repair, while the RuvA-RuvB complex plays an important role in the rescue of blocked DNA replication forks via replication fork reversal (RFR). RuvA specifically binds to HJ cruciform DNA, conferring on it an open structure. The RuvB hexamer acts as an ATP-dependent pump, pulling dsDNA into and through the RuvAB complex. HJ branch migration allows RuvC to scan DNA until it finds its consensus sequence, where it cleaves and resolves the cruciform DNA. In Methylorubrum populi (strain ATCC BAA-705 / NCIMB 13946 / BJ001) (Methylobacterium populi), this protein is Holliday junction branch migration complex subunit RuvA.